Consider the following 210-residue polypeptide: Heart- and neural crest derivatives-expressed protein 2 (210 aa).

Residues 81-101 (SGAGGLMQRPVKRRGTANRKE) form a disordered region. The span at 90–101 (PVKRRGTANRKE) shows a compositional bias: basic residues. A bHLH domain is found at 92 to 144 (KRRGTANRKERRRTISINSAFAELRECIPNVPADTKLSKIKTLRLATSYIAYL).

As to quaternary structure, efficient DNA binding requires dimerization with another bHLH protein. In terms of tissue distribution, heart, liver and spleen.

It is found in the nucleus. Essential for cardiac morphogenesis and for the development of branchial arches. Binds DNA on E-box consensus sequence 5'-CANNTG-3'. The protein is Heart- and neural crest derivatives-expressed protein 2 (hand2) of Xenopus laevis (African clawed frog).